The following is a 131-amino-acid chain: UPF0102 protein YraN (131 aa).

Polar residues predominate over residues 1 to 19 (MATVPTRSGSPRQLTTKQT). Residues 1–20 (MATVPTRSGSPRQLTTKQTG) form a disordered region.

It belongs to the UPF0102 family.

This Escherichia coli O8 (strain IAI1) protein is UPF0102 protein YraN.